The following is a 111-amino-acid chain: UPF0060 membrane protein XCC2880 (111 aa).

Helical transmembrane passes span 8 to 28 (LLLF…PYLW), 34 to 54 (SVWL…LLTL), 62 to 82 (VYAA…WWVD), and 91 to 111 (LLGA…PRSG).

It belongs to the UPF0060 family.

The protein resides in the cell inner membrane. This Xanthomonas campestris pv. campestris (strain ATCC 33913 / DSM 3586 / NCPPB 528 / LMG 568 / P 25) protein is UPF0060 membrane protein XCC2880.